We begin with the raw amino-acid sequence, 67 residues long: Putative sodium channel alpha-toxin Acra5 (67 aa).

The LCN-type CS-alpha/beta domain occupies arginine 2–arginine 65. 4 cysteine pairs are disulfide-bonded: cysteine 13/cysteine 64, cysteine 17/cysteine 40, cysteine 26/cysteine 45, and cysteine 30/cysteine 47. Arginine 67 is a propeptide (removed by a carboxypeptidase).

This sequence belongs to the long (4 C-C) scorpion toxin superfamily. Sodium channel inhibitor family. Alpha subfamily. As to expression, expressed by the venom gland.

The protein resides in the secreted. In terms of biological role, alpha toxins bind voltage-independently at site-3 of sodium channels (Nav) and inhibit the inactivation of the activated channels, thereby blocking neuronal transmission. This is Putative sodium channel alpha-toxin Acra5 from Androctonus crassicauda (Arabian fat-tailed scorpion).